The chain runs to 525 residues: 2,3-bisphosphoglycerate-independent phosphoglycerate mutase (525 aa).

Mn(2+) contacts are provided by aspartate 15 and serine 65. Serine 65 serves as the catalytic Phosphoserine intermediate. Residues histidine 126, arginine 156–aspartate 157, arginine 188, arginine 194, arginine 258–arginine 261, and lysine 331 each bind substrate. Mn(2+) is bound by residues aspartate 398, histidine 402, aspartate 439, histidine 440, and histidine 457.

Belongs to the BPG-independent phosphoglycerate mutase family. In terms of assembly, monomer. Mn(2+) serves as cofactor.

It carries out the reaction (2R)-2-phosphoglycerate = (2R)-3-phosphoglycerate. It participates in carbohydrate degradation; glycolysis; pyruvate from D-glyceraldehyde 3-phosphate: step 3/5. Catalyzes the interconversion of 2-phosphoglycerate and 3-phosphoglycerate. This Picosynechococcus sp. (strain ATCC 27264 / PCC 7002 / PR-6) (Agmenellum quadruplicatum) protein is 2,3-bisphosphoglycerate-independent phosphoglycerate mutase.